Here is a 274-residue protein sequence, read N- to C-terminus: Large ribosomal subunit protein uL2 (274 aa).

A disordered region spans residues 223-274; the sequence is VVMNPVDHPHGGGEGRTSGGRHPVSPWGVPTKGYKTRSNKRTDKYIVRRRNK.

This sequence belongs to the universal ribosomal protein uL2 family. Part of the 50S ribosomal subunit. Forms a bridge to the 30S subunit in the 70S ribosome.

Its function is as follows. One of the primary rRNA binding proteins. Required for association of the 30S and 50S subunits to form the 70S ribosome, for tRNA binding and peptide bond formation. It has been suggested to have peptidyltransferase activity; this is somewhat controversial. Makes several contacts with the 16S rRNA in the 70S ribosome. The sequence is that of Large ribosomal subunit protein uL2 from Vibrio cholerae serotype O1 (strain M66-2).